A 288-amino-acid chain; its full sequence is uncharacterized protein (288 aa).

Helical transmembrane passes span 43–63 (LFTL…NYII), 190–210 (LFIF…FLLE), 243–263 (GIPI…SILI), and 265–285 (LLQM…NKSL).

Its subcellular location is the cell membrane. This is an uncharacterized protein from Rickettsia prowazekii (strain Madrid E).